Consider the following 355-residue polypeptide: Putative transport protein PH1000 (355 aa).

The next 8 helical transmembrane spans lie at 34–54 (VTWI…LPFF), 55–75 (SPLF…IKLK), 84–104 (AILL…ILVY), 158–178 (FSVP…YFFL), 212–232 (VWLL…LIFK), 240–260 (ILAG…GWMI), 274–294 (IIAG…LPDF), and 310–330 (VLVL…GLII).

It belongs to the autoinducer-2 exporter (AI-2E) (TC 2.A.86) family.

It is found in the cell membrane. In Pyrococcus horikoshii (strain ATCC 700860 / DSM 12428 / JCM 9974 / NBRC 100139 / OT-3), this protein is Putative transport protein PH1000.